Reading from the N-terminus, the 34-residue chain is Photosystem II reaction center protein M (34 aa).

A helical membrane pass occupies residues 5–25 (ILAFIATALFILVPTAFLLII).

Belongs to the PsbM family. In terms of assembly, PSII is composed of 1 copy each of membrane proteins PsbA, PsbB, PsbC, PsbD, PsbE, PsbF, PsbH, PsbI, PsbJ, PsbK, PsbL, PsbM, PsbT, PsbX, PsbY, PsbZ, Psb30/Ycf12, at least 3 peripheral proteins of the oxygen-evolving complex and a large number of cofactors. It forms dimeric complexes.

It is found in the plastid. The protein resides in the chloroplast thylakoid membrane. In terms of biological role, one of the components of the core complex of photosystem II (PSII). PSII is a light-driven water:plastoquinone oxidoreductase that uses light energy to abstract electrons from H(2)O, generating O(2) and a proton gradient subsequently used for ATP formation. It consists of a core antenna complex that captures photons, and an electron transfer chain that converts photonic excitation into a charge separation. This subunit is found at the monomer-monomer interface. The polypeptide is Photosystem II reaction center protein M (Ceratophyllum demersum (Rigid hornwort)).